Here is a 215-residue protein sequence, read N- to C-terminus: Pyrrolidone-carboxylate peptidase (215 aa).

Catalysis depends on residues Glu80, Cys143, and His167.

This sequence belongs to the peptidase C15 family. In terms of assembly, homotetramer.

The protein localises to the cytoplasm. The enzyme catalyses Release of an N-terminal pyroglutamyl group from a polypeptide, the second amino acid generally not being Pro.. In terms of biological role, removes 5-oxoproline from various penultimate amino acid residues except L-proline. This Bacillus cereus (strain G9842) protein is Pyrrolidone-carboxylate peptidase.